Reading from the N-terminus, the 208-residue chain is Uracil phosphoribosyltransferase (208 aa).

5-phospho-alpha-D-ribose 1-diphosphate-binding positions include Arg-78, Arg-103, and Asp-130–Ser-138. Residues Ile-193 and Gly-198–Ala-200 each bind uracil. Asp-199 contacts 5-phospho-alpha-D-ribose 1-diphosphate.

It belongs to the UPRTase family. Mg(2+) serves as cofactor.

It catalyses the reaction UMP + diphosphate = 5-phospho-alpha-D-ribose 1-diphosphate + uracil. It functions in the pathway pyrimidine metabolism; UMP biosynthesis via salvage pathway; UMP from uracil: step 1/1. With respect to regulation, allosterically activated by GTP. Catalyzes the conversion of uracil and 5-phospho-alpha-D-ribose 1-diphosphate (PRPP) to UMP and diphosphate. The protein is Uracil phosphoribosyltransferase of Shewanella amazonensis (strain ATCC BAA-1098 / SB2B).